Consider the following 256-residue polypeptide: Thiazole synthase (256 aa).

The active-site Schiff-base intermediate with DXP is Lys98. 1-deoxy-D-xylulose 5-phosphate is bound by residues Gly159, 185-186, and 207-208; these read AG and NT.

It belongs to the ThiG family. In terms of assembly, homotetramer. Forms heterodimers with either ThiH or ThiS.

It is found in the cytoplasm. The enzyme catalyses [ThiS sulfur-carrier protein]-C-terminal-Gly-aminoethanethioate + 2-iminoacetate + 1-deoxy-D-xylulose 5-phosphate = [ThiS sulfur-carrier protein]-C-terminal Gly-Gly + 2-[(2R,5Z)-2-carboxy-4-methylthiazol-5(2H)-ylidene]ethyl phosphate + 2 H2O + H(+). It functions in the pathway cofactor biosynthesis; thiamine diphosphate biosynthesis. In terms of biological role, catalyzes the rearrangement of 1-deoxy-D-xylulose 5-phosphate (DXP) to produce the thiazole phosphate moiety of thiamine. Sulfur is provided by the thiocarboxylate moiety of the carrier protein ThiS. In vitro, sulfur can be provided by H(2)S. This Aliivibrio salmonicida (strain LFI1238) (Vibrio salmonicida (strain LFI1238)) protein is Thiazole synthase.